We begin with the raw amino-acid sequence, 291 residues long: Ribosomal RNA small subunit methyltransferase H (291 aa).

S-adenosyl-L-methionine is bound by residues 36 to 38 (GGH), Asp55, Leu88, Asp102, and Gln109. The disordered stretch occupies residues 268–291 (KPTQEETKNNPRARSAKLRVAERI).

Belongs to the methyltransferase superfamily. RsmH family.

The protein resides in the cytoplasm. It catalyses the reaction cytidine(1402) in 16S rRNA + S-adenosyl-L-methionine = N(4)-methylcytidine(1402) in 16S rRNA + S-adenosyl-L-homocysteine + H(+). Functionally, specifically methylates the N4 position of cytidine in position 1402 (C1402) of 16S rRNA. This is Ribosomal RNA small subunit methyltransferase H from Thermosipho melanesiensis (strain DSM 12029 / CIP 104789 / BI429).